The following is a 593-amino-acid chain: Metal-response element-binding transcription factor 2 (593 aa).

The interval 1–24 (MRDSTGAGNSLVHKRSPLRRNQKT) is disordered. The segment covering 12–22 (VHKRSPLRRNQ) has biased composition (basic residues). T24 carries the phosphothreonine modification. Residues 44-101 (CKFEEGQDVLARWSDGLFYLGTIKKINILKQSCFIIFEDSSKSWVLWKDIQTGATGSG) form the Tudor domain. 2 PHD-type zinc fingers span residues 102 to 157 (EMVC…CVFA) and 201 to 255 (QCYC…CSSG). 2 disordered regions span residues 357 to 410 (VAFK…GPYT) and 444 to 486 (GIAH…TRTG). K360 participates in a covalent cross-link: Glycyl lysine isopeptide (Lys-Gly) (interchain with G-Cter in SUMO2). The segment covering 360–374 (KAEKEPEGTSHEFKI) has biased composition (basic and acidic residues). Over residues 447–470 (HSSNTSDVDLTGASSANETTSASI) the composition is skewed to polar residues. S452 carries the post-translational modification Phosphoserine. K522 participates in a covalent cross-link: Glycyl lysine isopeptide (Lys-Gly) (interchain with G-Cter in SUMO2).

The protein belongs to the Polycomblike family. In terms of assembly, associates with the PRC2 complex, which consists of the core components EED, EZH1 or EZH2, SUZ12, and RBBP4, and various combinations of accessory subunits including AEBP2, JARID2, PHF19, MTF2 and EPOP. Forms a dimeric PRC2.1 (class 1, PRC-PCL) complex consisting of at least SUZ12, RBBP4, and PHF19 or MTF2; PHF19 and MTF2 stabilize the dimeric structure which enhances PRC2 interaction with chromatin.

The protein resides in the nucleus. In terms of biological role, polycomb group (PcG) protein that specifically binds histone H3 trimethylated at 'Lys-36' (H3K36me3) and recruits the PRC2 complex, thus enhancing PRC2 H3K27me3 methylation activity. Regulates the transcriptional networks during embryonic stem cell self-renewal and differentiation. Promotes recruitment of the PRC2 complex to the inactive X chromosome in differentiating XX ES cells and PRC2 recruitment to target genes in undifferentiated ES cells. Required to repress Hox genes by enhancing H3K27me3 methylation of the PRC2 complex. In some conditions may act as an inhibitor of PRC2 activity: able to activate the CDKN2A gene and promote cellular senescence by suppressing the catalytic activity of the PRC2 complex locally. Binds to the metal-regulating-element (MRE) of MT1A gene promoter. The sequence is that of Metal-response element-binding transcription factor 2 (Mtf2) from Mus musculus (Mouse).